A 179-amino-acid chain; its full sequence is MARLKDYYQKKLVAKLKTELGLDNIMEVPAIKKITLNMGVGDAAKDKKIMTFALNDLTAIAGQKPVVTKSKKSIAGFKIRDGWPIGAKVTLRGDRMYEFLDRLITIAIPRIRDFRGLSAKSFDGRGNYSLGMREQISFPEIDYDKVDSIRGLDISITTTAKNDDQGRALLKAFGFPFKS.

It belongs to the universal ribosomal protein uL5 family. As to quaternary structure, part of the 50S ribosomal subunit; part of the 5S rRNA/L5/L18/L25 subcomplex. Contacts the 5S rRNA and the P site tRNA. Forms a bridge to the 30S subunit in the 70S ribosome.

Functionally, this is one of the proteins that bind and probably mediate the attachment of the 5S RNA into the large ribosomal subunit, where it forms part of the central protuberance. In the 70S ribosome it contacts protein S13 of the 30S subunit (bridge B1b), connecting the 2 subunits; this bridge is implicated in subunit movement. Contacts the P site tRNA; the 5S rRNA and some of its associated proteins might help stabilize positioning of ribosome-bound tRNAs. In Francisella tularensis subsp. mediasiatica (strain FSC147), this protein is Large ribosomal subunit protein uL5.